A 128-amino-acid chain; its full sequence is Arginine decarboxylase proenzyme (128 aa).

The active-site Schiff-base intermediate with substrate; via pyruvic acid is the Ser76. A Pyruvic acid (Ser); by autocatalysis modification is found at Ser76. His81 acts as the Proton acceptor; for processing activity in catalysis. Cys96 (proton donor; for catalytic activity) is an active-site residue.

This sequence belongs to the prokaryotic AdoMetDC family. Type 1 subfamily. In terms of assembly, heterooctamer of four alpha and four beta chains arranged as a tetramer of alpha/beta heterodimers. Pyruvate serves as cofactor. Post-translationally, is synthesized initially as an inactive proenzyme. Formation of the active enzyme involves a self-maturation process in which the active site pyruvoyl group is generated from an internal serine residue via an autocatalytic post-translational modification. Two non-identical subunits are generated from the proenzyme in this reaction, and the pyruvate is formed at the N-terminus of the alpha chain, which is derived from the carboxyl end of the proenzyme. The post-translation cleavage follows an unusual pathway, termed non-hydrolytic serinolysis, in which the side chain hydroxyl group of the serine supplies its oxygen atom to form the C-terminus of the beta chain, while the remainder of the serine residue undergoes an oxidative deamination to produce ammonia and the pyruvoyl group blocking the N-terminus of the alpha chain.

It carries out the reaction L-arginine + H(+) = agmatine + CO2. The protein operates within amine and polyamine biosynthesis; agmatine biosynthesis; agmatine from L-arginine: step 1/1. In terms of biological role, specifically catalyzes the decarboxylation of L-arginine to agmatine. Has no S-adenosylmethionine decarboxylase (AdoMetDC) activity. The sequence is that of Arginine decarboxylase proenzyme from Metallosphaera sedula (strain ATCC 51363 / DSM 5348 / JCM 9185 / NBRC 15509 / TH2).